Reading from the N-terminus, the 192-residue chain is Phosphoheptose isomerase (192 aa).

The SIS domain maps to 37 to 192 (LADSFKAGGK…IQLIEKEMVK (156 aa)). Residue 52 to 54 (NGG) participates in substrate binding. Residues His61 and Glu65 each contribute to the Zn(2+) site. Substrate-binding positions include Glu65, 93–94 (ND), 119–121 (STS), Ser124, and Gln172. Residues Gln172 and His180 each contribute to the Zn(2+) site.

It belongs to the SIS family. GmhA subfamily. Homotetramer. It depends on Zn(2+) as a cofactor.

Its subcellular location is the cytoplasm. The enzyme catalyses 2 D-sedoheptulose 7-phosphate = D-glycero-alpha-D-manno-heptose 7-phosphate + D-glycero-beta-D-manno-heptose 7-phosphate. The protein operates within carbohydrate biosynthesis; D-glycero-D-manno-heptose 7-phosphate biosynthesis; D-glycero-alpha-D-manno-heptose 7-phosphate and D-glycero-beta-D-manno-heptose 7-phosphate from sedoheptulose 7-phosphate: step 1/1. Functionally, catalyzes the isomerization of sedoheptulose 7-phosphate in D-glycero-D-manno-heptose 7-phosphate. The sequence is that of Phosphoheptose isomerase from Salmonella agona (strain SL483).